Reading from the N-terminus, the 439-residue chain is MKRAAIRLWTLNKGLLTHGRGLSQGSQYKISEPLHIHQVRDKLREIVGVSTVWRDHVKAMEERKLLHSFLPKSQKVLPPRKMRDSYIEVLLPLGTDPELRDKYVTVQNTVRFGRILEDLDSLGVLVCYMHNHNHSTKMSPLSIVTVLVDKIDMCKHSLSPEQDIKFTGHVSWVGNTSMEVKMKMFQLHNDEKYWPVLDATFVMVARDSENKGPAFVNPLIPENKEEEELFKQGELNKSRRIAFSTSSLLKVAPSSEERNIIHELFLTTLDPKTISFQSRILPPKAVWMEDTKLKSLDICHPQERNVFNRIFGGFLMRKAYELAWATACSFGGSRPYVVTVDDIMFQKPVEVGSLLFLSSQVCFTQDNYIQVRVHSEVSSLDSREHMTTNVFHFTFMSEKEVPLIFPKTYGESMLYLDGQRHFKSMSTPVTLKKDYPVEP.

The transit peptide at 1–21 (MKRAAIRLWTLNKGLLTHGRG) directs the protein to the mitochondrion. HotDog ACOT-type domains follow at residues 85-209 (SYIE…RDSE) and 289-401 (EDTK…EKEV). Lysine 102 carries the post-translational modification N6-acetyllysine.

It belongs to the acyl coenzyme A hydrolase family. In terms of assembly, interacts with NYAP1, NYAP2 and MYO16. Widely expressed.

The protein resides in the mitochondrion. Its subcellular location is the mitochondrion matrix. It is found in the mitochondrion inner membrane. The catalysed reaction is butanoyl-CoA + H2O = butanoate + CoA + H(+). The enzyme catalyses propanoyl-CoA + H2O = propanoate + CoA + H(+). It carries out the reaction hexadecanoyl-CoA + H2O = hexadecanoate + CoA + H(+). It catalyses the reaction octanoyl-CoA + H2O = octanoate + CoA + H(+). The catalysed reaction is decanoyl-CoA + H2O = decanoate + CoA + H(+). The enzyme catalyses tetradecanoyl-CoA + H2O = tetradecanoate + CoA + H(+). It carries out the reaction 4,8-dimethylnonanoyl-CoA + H2O = 4,8-dimethylnonanoate + CoA + H(+). It catalyses the reaction 3-methylbutanoyl-CoA + H2O = 3-methylbutanoate + CoA + H(+). The catalysed reaction is 2-methylpropanoyl-CoA + H2O = 2-methylpropanoate + CoA + H(+). The protein operates within lipid metabolism; fatty acid metabolism. Strongly inhibited by NADH and CoA. Mitochondrial acyl-CoA thioesterase. Catalyzes the hydrolysis of acyl-CoAs into free fatty acids and coenzyme A (CoA), regulating their respective intracellular levels. Shows a clear preference for hydrophobic short-, medium-, and long-chain saturated acyl-CoAs with some activity also with short-chain dicarboxylic CoA esters. Regulates both mitochondrial lipid and amino acid metabolism. This is Acyl-coenzyme A thioesterase 9, mitochondrial (Acot9) from Mus musculus (Mouse).